Consider the following 334-residue polypeptide: DNA-directed RNA polymerase subunit alpha (334 aa).

The tract at residues 1–233 is alpha N-terminal domain (alpha-NTD); it reads MADQTISNVL…NLFTPLVSQE (233 aa). The interval 263–334 is alpha C-terminal domain (alpha-CTD); the sequence is DNENSYNLYN…QLKKRFKIQL (72 aa).

The protein belongs to the RNA polymerase alpha chain family. In terms of assembly, in plastids the minimal PEP RNA polymerase catalytic core is composed of four subunits: alpha, beta, beta', and beta''. When a (nuclear-encoded) sigma factor is associated with the core the holoenzyme is formed, which can initiate transcription.

Its subcellular location is the plastid. The protein localises to the chloroplast. It carries out the reaction RNA(n) + a ribonucleoside 5'-triphosphate = RNA(n+1) + diphosphate. Its function is as follows. DNA-dependent RNA polymerase catalyzes the transcription of DNA into RNA using the four ribonucleoside triphosphates as substrates. This is DNA-directed RNA polymerase subunit alpha from Chaetosphaeridium globosum (Charophycean green alga).